A 307-amino-acid chain; its full sequence is Small ribosomal subunit protein bS1 (307 aa).

S1 motif domains lie at 32–101 (GDTV…LSIR), 119–183 (DATV…LSHR), and 197–265 (GEVV…LSTK).

Belongs to the bacterial ribosomal protein bS1 family.

Its function is as follows. Binds mRNA. The protein is Small ribosomal subunit protein bS1 (rpsA) of Synechococcus sp. (strain ATCC 27144 / PCC 6301 / SAUG 1402/1) (Anacystis nidulans).